Reading from the N-terminus, the 427-residue chain is Dihydroorotase (427 aa).

Zn(2+)-binding residues include His-60 and His-62. Substrate is bound by residues 62-64 (HLR) and Asn-94. 3 residues coordinate Zn(2+): Asp-152, His-179, and His-232. Substrate is bound at residue Asn-278. Asp-305 is a binding site for Zn(2+). Asp-305 is a catalytic residue. Residues His-309 and 323 to 324 (FG) each bind substrate.

This sequence belongs to the metallo-dependent hydrolases superfamily. DHOase family. Class I DHOase subfamily. Requires Zn(2+) as cofactor.

The catalysed reaction is (S)-dihydroorotate + H2O = N-carbamoyl-L-aspartate + H(+). The protein operates within pyrimidine metabolism; UMP biosynthesis via de novo pathway; (S)-dihydroorotate from bicarbonate: step 3/3. Catalyzes the reversible cyclization of carbamoyl aspartate to dihydroorotate. The polypeptide is Dihydroorotase (Bacillus caldolyticus).